The primary structure comprises 166 residues: Regulatory protein RecX (166 aa).

This sequence belongs to the RecX family.

Its subcellular location is the cytoplasm. Functionally, modulates RecA activity. The chain is Regulatory protein RecX from Shigella boydii serotype 18 (strain CDC 3083-94 / BS512).